Reading from the N-terminus, the 189-residue chain is Elongation factor P (189 aa).

The protein belongs to the elongation factor P family.

It localises to the cytoplasm. The protein operates within protein biosynthesis; polypeptide chain elongation. Functionally, involved in peptide bond synthesis. Stimulates efficient translation and peptide-bond synthesis on native or reconstituted 70S ribosomes in vitro. Probably functions indirectly by altering the affinity of the ribosome for aminoacyl-tRNA, thus increasing their reactivity as acceptors for peptidyl transferase. This is Elongation factor P from Ehrlichia canis (strain Jake).